Consider the following 310-residue polypeptide: Ribosomal RNA small subunit methyltransferase H (310 aa).

S-adenosyl-L-methionine is bound by residues Ala33–His35, Asp53, Phe79, Asp100, and Gln107.

This sequence belongs to the methyltransferase superfamily. RsmH family.

Its subcellular location is the cytoplasm. The enzyme catalyses cytidine(1402) in 16S rRNA + S-adenosyl-L-methionine = N(4)-methylcytidine(1402) in 16S rRNA + S-adenosyl-L-homocysteine + H(+). Specifically methylates the N4 position of cytidine in position 1402 (C1402) of 16S rRNA. The chain is Ribosomal RNA small subunit methyltransferase H from Clostridium botulinum (strain Alaska E43 / Type E3).